A 629-amino-acid polypeptide reads, in one-letter code: MDKSMIKKRGRPPITKDYPNPLQSPMAHSSMQVQKQGPHSFAKPLMKVGQSSPSPNKRRLSIDHHHNLAATTRKGRYRGVLLSTPTKKSSTNGSTPISTPSSNDSYNNTVFSETRKTFLQSSPPIMTSSPAFQKKNDYMFPSQEQFKLSLTITESGKAVIAGSLPFSPSSKSSHLMNNNNKKIMQNEKIHKGSKKNAPKFEKRRILSLLKQMKNEKYCDTDTLPEAPPAKPSRSDIIDTELPTIIETSASPIGSARNNNILLSQPPQSPPSSAQLKPPSTPKSSLQFRMGFTPNVALNSVSLSDTISKSTNAVGASNNNNQNGNSISNIADANTLLTLTNSPGVFLSPRNKMLPKSTTASNEQQQEFVFKFSSGDPLLLTDDADGNWPEMLFNVSNTPRRQKCFNTPPSWINFGSPGLFSPPRSSNVMVNGTTVATASDSGNVHRQLQAQLEAQVQVQSQSNSPTQRQQQQRQFQIPPPHINMNSSPPQINIASPPHQSMSRVSSIYFNKEKTTTGVANMLGNTKSENLQPPANLFTAAHGPSTPRNQEFQLPTLIECTPLIQQTMNGSLGTKYIPGTSISNSATPNLHGFPVGTGKAPSSFDDSLKQNPYSNKQDDARTALKRLIDDQ.

The span at 1–11 shows a compositional bias: basic residues; that stretch reads MDKSMIKKRGR. 5 disordered regions span residues 1 to 60, 83 to 106, 217 to 286, 455 to 485, and 586 to 629; these read MDKS…KRRL, STPT…NDSY, YCDT…SSLQ, VQVQ…NMNS, and PNLH…IDDQ. The span at 21 to 37 shows a compositional bias: polar residues; sequence PLQSPMAHSSMQVQKQG. Positions 245–260 are enriched in polar residues; that stretch reads IETSASPIGSARNNNI. 2 stretches are compositionally biased toward low complexity: residues 261–277 and 455–475; these read LLSQ…QLKP and VQVQ…RQFQ. Ser-268 carries the phosphoserine modification. Residues 614–629 are compositionally biased toward basic and acidic residues; the sequence is KQDDARTALKRLIDDQ.

Interacts with transcription complexes SCB-binding factor (SBF) and MCB-binding factor (MBF) at their target promoters. Interacts with MBP1 and SWI6. Post-translationally, phosphorylated by CDC28.

In terms of biological role, activator of G1-specific transcription factors, MBF and SBF. Promotes both the timing of G1-specific gene transcription and cell cycle initiation. Associates with SBF- and MBF-regulated target promoters and this binding is maximal during the G1 phase, prior to maximum budding. Affects cell cycle initiation by advancing the timing of transcription of G1-specific genes. Overexpression advances the timing of SBF-dependent transcription and budding. Depletion delays both indicators of cell cycle initiation. In Saccharomyces cerevisiae (strain ATCC 204508 / S288c) (Baker's yeast), this protein is G1-specific transcription factors activator MSA1 (MSA1).